Reading from the N-terminus, the 247-residue chain is DNA polymerase sliding clamp (247 aa).

Belongs to the PCNA family. Homotrimer. The subunits circularize to form a toroid; DNA passes through its center. Replication factor C (RFC) is required to load the toroid on the DNA.

Functionally, sliding clamp subunit that acts as a moving platform for DNA processing. Responsible for tethering the catalytic subunit of DNA polymerase and other proteins to DNA during high-speed replication. In Methanoregula boonei (strain DSM 21154 / JCM 14090 / 6A8), this protein is DNA polymerase sliding clamp.